Reading from the N-terminus, the 143-residue chain is MAEEAPAPVVAPVEAPTPILGEPMDLMTALQLVMKKSSAHDGLVKGLREAAKSIEKHAAQLCVLAEDCDQPDYVKLVKALCAEHNVHLVTVPSAKTLGEWAGLCKIDTEGKARKVVGCSCIVVKDYGEESEGLNIVQQYVKSQ.

Belongs to the eukaryotic ribosomal protein eS12 family.

The chain is Small ribosomal subunit protein eS12 (RPS12) from Hordeum vulgare (Barley).